The following is a 359-amino-acid chain: Guanine nucleotide-binding protein alpha-4 subunit (359 aa).

Residue Gly-2 is the site of N-myristoyl glycine attachment. Cys-3 carries the S-palmitoyl cysteine lipid modification. One can recognise a G-alpha domain in the interval 31 to 359 (TEVKLLLLGA…RYNLKDCGLF (329 aa)). A G1 motif region spans residues 34–47 (KLLLLGAGESGKST). Residues 39 to 46 (GAGESGKS), 178 to 184 (LRARVKS), 203 to 207 (DVGGQ), 272 to 275 (NKMD), and Ala-331 contribute to the GTP site. Ser-46 contributes to the Mg(2+) binding site. The segment at 176 to 184 (DILRARVKS) is G2 motif. The tract at residues 199–208 (FRMFDVGGQR) is G3 motif. The tract at residues 268-275 (ILFLNKMD) is G4 motif. Residues 329 to 334 (TCATDT) form a G5 motif region.

The protein belongs to the G-alpha family. G(i/o/t/z) subfamily. As to quaternary structure, g proteins are composed of 3 units; alpha, beta and gamma. The alpha chain contains the guanine nucleotide binding site.

Its function is as follows. Guanine nucleotide-binding proteins (G proteins) are involved as modulators or transducers in various transmembrane signaling systems. The chain is Guanine nucleotide-binding protein alpha-4 subunit (gpa-4) from Caenorhabditis briggsae.